The sequence spans 325 residues: tRNA (guanine-N(7)-)-methyltransferase (325 aa).

The disordered stretch occupies residues 1–101 (MSEATDKQKQ…LEYPKSPESM (101 aa)). Polar residues predominate over residues 51–69 (VSTTPEPEQSDSSATTATI). Residues Gly-122, 145-146 (EI), 199-200 (NA), and Cys-219 contribute to the S-adenosyl-L-methionine site. The active site involves Asp-222. 297–299 (TEE) contacts S-adenosyl-L-methionine.

The protein belongs to the class I-like SAM-binding methyltransferase superfamily. TrmB family. Forms a complex with TRM82.

It localises to the nucleus. The catalysed reaction is guanosine(46) in tRNA + S-adenosyl-L-methionine = N(7)-methylguanosine(46) in tRNA + S-adenosyl-L-homocysteine. The protein operates within tRNA modification; N(7)-methylguanine-tRNA biosynthesis. Catalyzes the formation of N(7)-methylguanine at position 46 (m7G46) in tRNA. The polypeptide is tRNA (guanine-N(7)-)-methyltransferase (Candida albicans (strain SC5314 / ATCC MYA-2876) (Yeast)).